The primary structure comprises 201 residues: 3-isopropylmalate dehydratase small subunit (201 aa).

It belongs to the LeuD family. LeuD type 1 subfamily. In terms of assembly, heterodimer of LeuC and LeuD.

The catalysed reaction is (2R,3S)-3-isopropylmalate = (2S)-2-isopropylmalate. It functions in the pathway amino-acid biosynthesis; L-leucine biosynthesis; L-leucine from 3-methyl-2-oxobutanoate: step 2/4. Functionally, catalyzes the isomerization between 2-isopropylmalate and 3-isopropylmalate, via the formation of 2-isopropylmaleate. This chain is 3-isopropylmalate dehydratase small subunit, found in Agrobacterium fabrum (strain C58 / ATCC 33970) (Agrobacterium tumefaciens (strain C58)).